The chain runs to 474 residues: Nitric oxide reductase subunit B (474 aa).

The helical transmembrane segment at 19 to 39 (YFVFALILFVGQVLFGLIMGL) threads the bilayer. His-60 lines the heme b pocket. 8 helical membrane passes run 61–81 (TNLLIVWLLFGFMGAAYYLIP), 95–115 (IILFWVFAAAGVLTILGYLFV), 145–165 (IGIVVVALGFLYNIGMTMLKG), 169–189 (VVSTVMMTGLIGLAVFFLFAF), 207–227 (HLWVEGVWELIMGAMLAFVLI), 243–263 (VIIAMALITGIIGTGHHFFWI), 270–290 (LWVGSIFSALEPLPFFAMVLF), and 308–328 (SLWAIGTTVTAFLGAGVWGFM). Fe cation contacts are provided by His-207, His-258, and His-259. Heme b is bound by residues His-347 and His-349. The next 3 helical transmembrane spans lie at 348-368 (GHLAFYGAYAMIVMTMISYAM), 390-410 (FWLMTISMIAITLFLTAAGVV), and 433-453 (LAIFFWLRFIAGVFFLIGLVC).

It belongs to the heme-copper respiratory oxidase family. Heterodimer of cytochromes b (large subunit) and c (small subunit).

The protein resides in the cell membrane. The enzyme catalyses nitrous oxide + 2 Fe(III)-[cytochrome c] + H2O = 2 nitric oxide + 2 Fe(II)-[cytochrome c] + 2 H(+). It participates in nitrogen metabolism; nitrate reduction (denitrification); dinitrogen from nitrate: step 3/4. Component of the anaerobic respiratory chain that transforms nitrate to dinitrogen (denitrification). NorB is the catalytic subunit of the enzyme complex. Shows proton pump activity across the membrane in denitrifying bacterial cells. The mononitrogen reduction is probably coupled to electron transport phosphorylation. In Stutzerimonas stutzeri (Pseudomonas stutzeri), this protein is Nitric oxide reductase subunit B (norB).